The primary structure comprises 480 residues: Transposase for transposon Tn552 (480 aa).

Positions 36 to 55 (LSSISKSKGIALSTLYRWNK) form a DNA-binding region, H-T-H motif. The region spanning 155 to 341 (ESSRPNEIWQ…TPINRWNSNH (187 aa)) is the Integrase catalytic domain. Positions 438–480 (RKHLKQNIASPSTTDLIKEEKSYGYSPQETTKNVKKLKRYRND) are disordered. The span at 470–480 (NVKKLKRYRND) shows a compositional bias: basic residues.

The chain is Transposase for transposon Tn552 from Staphylococcus aureus.